A 121-amino-acid chain; its full sequence is Large ribosomal subunit protein uL22c (121 aa).

Belongs to the universal ribosomal protein uL22 family. As to quaternary structure, part of the 50S ribosomal subunit.

It is found in the plastid. The protein resides in the chloroplast. Its function is as follows. This protein binds specifically to 23S rRNA. In terms of biological role, the globular domain of the protein is located near the polypeptide exit tunnel on the outside of the subunit, while an extended beta-hairpin is found that lines the wall of the exit tunnel in the center of the 70S ribosome. The sequence is that of Large ribosomal subunit protein uL22c (rpl22) from Welwitschia mirabilis (Tree tumbo).